Here is a 524-residue protein sequence, read N- to C-terminus: Capsid scaffolding protein (524 aa).

Catalysis depends on charge relay system residues His47, Ser116, and His137. The segment at 268–287 (DDLIPVPRSAFLNMLESTVS) is interaction with pAP. A Nuclear localization signal motif is present at residues 359–365 (RPRKRAR). The tract at residues 359 to 378 (RPRKRAREDPEDEVSFPGEE) is disordered. The interaction with major capsid protein stretch occupies residues 504 to 524 (AETSKAATLQKLFCDEMLSKQ).

The protein belongs to the herpesviridae capsid scaffolding protein family. As to quaternary structure, homomultimer. Interacts with major capsid protein. Exists in a monomer-dimer equilibrium with the dimer being the active species. In terms of processing, capsid scaffolding protein is cleaved by assemblin after formation of the spherical procapsid. As a result, the capsid obtains its mature, icosahedral shape. Cleavages occur at two or more sites: release (R-site) and maturation (M-site).

It localises to the host cytoplasm. The protein resides in the host nucleus. It catalyses the reaction Cleaves -Ala-|-Ser- and -Ala-|-Ala- bonds in the scaffold protein.. Its function is as follows. Acts as a scaffold protein by binding major capsid protein in the cytoplasm, inducing the nuclear localization of both proteins. Multimerizes in the nucleus such as major capsid protein forms the icosahedral T=16 capsid. Autocatalytic cleavage releases the assembly protein, and subsequently abolishes interaction with major capsid protein. Cleavages products are evicted from the capsid before or during DNA packaging. In terms of biological role, protease that plays an essential role in virion assembly within the nucleus. Catalyzes the cleavage of the assembly protein after formation of the spherical procapsid. By that cleavage, the capsid matures and gains its icosahedral shape. The cleavage sites seem to include -Ala-Ser-, -Ala-Ala-, as well as Ala-Thr bonds. Assemblin and cleavages products are evicted from the capsid before or during DNA packaging. Functionally, plays a major role in capsid assembly. Acts as a scaffold protein by binding major capsid protein. Multimerizes in the nucleus such as major capsid protein forms the icosahedral T=16 capsid. Cleaved by assemblin after capsid completion. The cleavages products are evicted from the capsid before or during DNA packaging. The sequence is that of Capsid scaffolding protein (17) from Connochaetes taurinus (Blue wildebeest).